We begin with the raw amino-acid sequence, 260 residues long: Acyl-coenzyme A diphosphatase FITM2 (260 aa).

Residues 1 to 23 (MERLENCAQMFQRKFLNEAFRRH) are Cytoplasmic-facing. Residues 24–44 (CPVLLACIALGGSLLKELSPL) form a helical membrane-spanning segment. Residues 45 to 57 (PDSYWNNKRNVLN) lie on the Lumenal side of the membrane. The chain crosses the membrane as a helical span at residues 58 to 78 (VYFVKFCWGWTLWLLLPFITL). Over 79–93 (TNYKLTGSITKVLRR) the chain is Cytoplasmic. A helical transmembrane segment spans residues 94 to 114 (LSSLLVGTLFWYLCTNLFLYI). Residues 115-144 (EHITGSCYESEALLDSIEHQDRKECRLHGG) lie on the Lumenal side of the membrane. A helical membrane pass occupies residues 145–165 (FWHGFDISGHCFLLSYCILII). The active site involves H154. The Cytoplasmic portion of the chain corresponds to 166 to 189 (LEETSVIRSIQFERHWHRMAINAQ). Transmembrane regions (helical) follow at residues 190–210 (FTAL…TAVY) and 211–231 (FHNI…WYIT). Residue H212 is part of the active site. The Cytoplasmic portion of the chain corresponds to 232–260 (YRWWYLQPISPGLPPASASHSEKEPVYKN).

Belongs to the FIT family. FIT2 subfamily.

It localises to the endoplasmic reticulum membrane. It carries out the reaction an acyl-CoA + H2O = an acyl-4'-phosphopantetheine + adenosine 3',5'-bisphosphate + 2 H(+). In terms of biological role, fatty acyl-coenzyme A (CoA) diphosphatase that hydrolyzes fatty acyl-CoA to yield acyl-4'-phosphopantetheine and adenosine 3',5'-bisphosphate. Preferentially hydrolyzes unsaturated long-chain acyl-CoA substrates in the endoplasmic reticulum (ER) lumen. This catalytic activity is required for maintaining ER structure and for lipid droplets (LDs) biogenesis, which are lipid storage organelles involved in maintaining lipid and energy homeostasis. May directly bind to diacylglycerol (DAGs) and triacylglycerol, which is also important for LD biogenesis. May support directional budding of nacent LDs from the ER into the cytosol by reducing DAG levels at sites of LD formation. May play a role in the regulation of cell morphology, ER morphology and cytoskeletal organization. The polypeptide is Acyl-coenzyme A diphosphatase FITM2 (Xenopus laevis (African clawed frog)).